Here is an 80-residue protein sequence, read N- to C-terminus: Dermaseptin-A5 (80 aa).

Positions 1 to 22 (MAFLKKSLFLVLFLGLVSLSIC) are cleaved as a signal peptide. A propeptide spanning residues 23–43 (EEEKRENEDEEEQEDDEQSEM) is cleaved from the precursor. The disordered stretch occupies residues 24–45 (EEKRENEDEEEQEDDEQSEMKR). Residues 30–40 (EDEEEQEDDEQ) show a composition bias toward acidic residues. Valine amide is present on V77. The propeptide occupies 79 to 80 (EQ).

It belongs to the frog skin active peptide (FSAP) family. Dermaseptin subfamily. In terms of tissue distribution, expressed by the skin glands.

It localises to the secreted. In terms of biological role, possesses a potent antimicrobial activity against Gram-positive and Gram-negative bacteria. Probably acts by disturbing membrane functions with its amphipathic structure. The polypeptide is Dermaseptin-A5 (Agalychnis annae (Blue-sided leaf frog)).